We begin with the raw amino-acid sequence, 100 residues long: Urease subunit gamma (100 aa).

This sequence belongs to the urease gamma subunit family. As to quaternary structure, heterotrimer of UreA (gamma), UreB (beta) and UreC (alpha) subunits. Three heterotrimers associate to form the active enzyme.

The protein localises to the cytoplasm. The catalysed reaction is urea + 2 H2O + H(+) = hydrogencarbonate + 2 NH4(+). It functions in the pathway nitrogen metabolism; urea degradation; CO(2) and NH(3) from urea (urease route): step 1/1. This chain is Urease subunit gamma, found in Allorhizobium ampelinum (strain ATCC BAA-846 / DSM 112012 / S4) (Agrobacterium vitis (strain S4)).